The primary structure comprises 818 residues: Dipeptidyl aminopeptidase B (818 aa).

The Cytoplasmic segment spans residues 1-29 (MEGGEEEVERIPDELFDTKKKHLLDKLIR). A helical; Signal-anchor for type II membrane protein transmembrane segment spans residues 30–45 (VGIILVLLIWGTVLLL). At 46-818 (KSIPHHSNTP…KRAFDGQFVK (773 aa)) the chain is on the lumenal side. N-linked (GlcNAc...) asparagine glycosylation is found at N63, N79, N110, N139, N372, N392, and N421. The Charge relay system role is filled by S679. N-linked (GlcNAc...) asparagine glycosylation occurs at N738. Residues D756 and H789 each act as charge relay system in the active site.

The protein belongs to the peptidase S9B family.

The protein localises to the vacuole membrane. This is Dipeptidyl aminopeptidase B (DAP2) from Saccharomyces cerevisiae (strain ATCC 204508 / S288c) (Baker's yeast).